The sequence spans 177 residues: tRNA-splicing endonuclease (177 aa).

Catalysis depends on residues Tyr-114, His-123, and Lys-154.

It belongs to the tRNA-intron endonuclease family. Archaeal short subfamily. As to quaternary structure, homotetramer; although the tetramer contains four active sites, only two participate in the cleavage. Therefore, it should be considered as a dimer of dimers.

The catalysed reaction is pretRNA = a 3'-half-tRNA molecule with a 5'-OH end + a 5'-half-tRNA molecule with a 2',3'-cyclic phosphate end + an intron with a 2',3'-cyclic phosphate and a 5'-hydroxyl terminus.. Functionally, endonuclease that removes tRNA introns. Cleaves pre-tRNA at the 5'- and 3'-splice sites to release the intron. The products are an intron and two tRNA half-molecules bearing 2',3' cyclic phosphate and 5'-OH termini. Recognizes a pseudosymmetric substrate in which 2 bulged loops of 3 bases are separated by a stem of 4 bp. The protein is tRNA-splicing endonuclease of Methanococcus maripaludis (strain DSM 14266 / JCM 13030 / NBRC 101832 / S2 / LL).